The primary structure comprises 309 residues: DDRGK domain-containing protein 1 (309 aa).

The Lumenal segment spans residues 1–2; the sequence is MD. The helical transmembrane segment at 3-23 threads the bilayer; it reads LIILVGIAVALLVVIVTLYLL. Over 24–309 the chain is Cytoplasmic; the sequence is QKKNAAPETK…ISAGGGEASS (286 aa). 2 disordered regions span residues 32 to 53 and 79 to 175; these read TKVA…VPRR and ALPA…KEER. Residues 87 to 96 show a composition bias toward acidic residues; the sequence is DHEDEGQVDG. Basic and acidic residues predominate over residues 107 to 175; sequence LDEKMGAKKR…DAERLAKEER (69 aa). Positions 120-177 form a coiled coil; sequence EAKEQKRLQREQELHDREQRKVKEAKEEAERKQQEDLEAEAERKRVDAERLAKEERER.

The protein belongs to the DDRGK1 family. As to quaternary structure, interacts with Atg9; the interaction is transient.

It is found in the endoplasmic reticulum membrane. Functionally, substrate adapter for ufmylation, the covalent attachment of the ubiquitin-like modifier UFM1 to substrate proteins. Required for ufmylation of Atg9; protects the nervous system during aging, possibly by stabilizing Atg9 and supporting its function. The protein is DDRGK domain-containing protein 1 of Drosophila melanogaster (Fruit fly).